Consider the following 172-residue polypeptide: Adrenodoxin homolog, mitochondrial (172 aa).

The transit peptide at 1-16 directs the protein to the mitochondrion; the sequence is MLKIVTRAGHTARISN. A 2Fe-2S ferredoxin-type domain is found at 61-163; it reads LKITFILKDG…GIRVALPQMT (103 aa). Residues Cys-98, Cys-104, Cys-107, and Cys-144 each contribute to the [2Fe-2S] cluster site.

This sequence belongs to the adrenodoxin/putidaredoxin family. In terms of assembly, interacts in its reduced state with the apo form of ISU1. The cofactor is [2Fe-2S] cluster.

Its subcellular location is the mitochondrion matrix. In terms of biological role, iron-sulfur protein that transfers electrons in a wide variety of metabolic reactions. Involved in heme A biosynthesis and in iron-sulfur cluster assembly. Transfers electrons from adrenodoxin reductase ARH1 to heme A synthase COX15, a heme protein that catalyzes the conversion of heme O to heme A. Required for the de novo synthesis of Fe-S clusters on iron sulfur cluster assembly protein ISU1. Interact in its reduced state with ISU1 to productively deliver electrons for Fe-S cluster synthesis. Essential for coenzyme Q biosynthesis. May transfer the electrons required for the hydroxylation reaction performed by COQ6. This is Adrenodoxin homolog, mitochondrial from Saccharomyces cerevisiae (strain ATCC 204508 / S288c) (Baker's yeast).